Consider the following 238-residue polypeptide: Aspartate/glutamate leucyltransferase (238 aa).

It belongs to the R-transferase family. Bpt subfamily.

Its subcellular location is the cytoplasm. The enzyme catalyses N-terminal L-glutamyl-[protein] + L-leucyl-tRNA(Leu) = N-terminal L-leucyl-L-glutamyl-[protein] + tRNA(Leu) + H(+). The catalysed reaction is N-terminal L-aspartyl-[protein] + L-leucyl-tRNA(Leu) = N-terminal L-leucyl-L-aspartyl-[protein] + tRNA(Leu) + H(+). Functions in the N-end rule pathway of protein degradation where it conjugates Leu from its aminoacyl-tRNA to the N-termini of proteins containing an N-terminal aspartate or glutamate. This is Aspartate/glutamate leucyltransferase from Shewanella sp. (strain MR-4).